The sequence spans 465 residues: Putative ABC transporter ATP-binding protein MG065 homolog (465 aa).

The ABC transporter domain maps to 232–465 (IELKNVYKYI…PKQVEDINWI (234 aa)). 268–275 (GPSGSGKT) contacts ATP.

Belongs to the ABC transporter superfamily.

This Mycoplasma pneumoniae (strain ATCC 29342 / M129 / Subtype 1) (Mycoplasmoides pneumoniae) protein is Putative ABC transporter ATP-binding protein MG065 homolog.